The following is a 228-amino-acid chain: Calcyclin-binding protein (228 aa).

The residue at position 1 (Met-1) is an N-acetylmethionine. N-acetylalanine is present on Ala-2. Positions 2–80 are interaction with SIAH1; sequence ASEELQKDLE…YTVKISNYGW (79 aa). Ser-3 bears the Phosphoserine mark. N6-acetyllysine occurs at positions 8 and 19. Ser-34 is modified (phosphoserine). One can recognise a CS domain in the interval 73 to 167; that stretch reads VKISNYGWDQ…VENTRWDYLT (95 aa). The segment at 73–228 is interaction with SKP1; that stretch reads VKISNYGWDQ…EKQAKGDTEF (156 aa). Residues Lys-85 and Lys-118 each carry the N6-acetyllysine modification. Residues 154 to 228 form an interaction with S100A6 region; the sequence is CRKKVENTRW…EKQAKGDTEF (75 aa). The SGS domain occupies 168 to 228; the sequence is QVEKECKEKE…EKQAKGDTEF (61 aa).

As to quaternary structure, homodimer. Interacts with proteins of the S100 family S100A1, S100A6, S100B, S100P and S100A12 in a calcium-dependent manner. Component of some large E3 complex at least composed of UBE2D1, SIAH1, CACYBP/SIP, SKP1, APC and TBL1X. Interacts directly with SIAH1, SIAH2 and SKP1. Phosphorylated on serine residues. Phosphorylated upon induction by RA or at high calcium concentrations.

The protein localises to the nucleus. It is found in the cytoplasm. Functionally, may be involved in calcium-dependent ubiquitination and subsequent proteasomal degradation of target proteins. Probably serves as a molecular bridge in ubiquitin E3 complexes. Participates in the ubiquitin-mediated degradation of beta-catenin (CTNNB1). This chain is Calcyclin-binding protein (CACYBP), found in Homo sapiens (Human).